We begin with the raw amino-acid sequence, 294 residues long: MSSFAIFGNPVSHSKSPKIYSMFANEFGMCGEYDLKVASDDNFYNLLYQFFDMGGFGANITVPFKKRAFLLCDNLTDRSILSSTVNTIKKQLDGTLLGDNTDGIGLINDLKRLNWISIDNAFIDMTCNNIQETANILLIGSGGAAQSIIPVLLDIKKCCVNIINRTFFNAQRLVQYYHSIGRQNISCIDLNNLLCEKNACKKYDLIINASSSSMNNDLPCISSFLITPFTKCYDLFYGNQDTIFVKWCKKNGSNYCVDGLGMLIEQAAYAFYLWHGKKPSVPIVLNAFRSELCK.

Shikimate is bound by residues 14–16 (SKS) and T61. Residue K65 is the Proton acceptor of the active site. Residue D77 coordinates NADP(+). Positions 86 and 102 each coordinate shikimate. Residues 140–144 (GSGGA) and L235 each bind NADP(+). A shikimate-binding site is contributed by Y237. G259 is a binding site for NADP(+).

The protein belongs to the shikimate dehydrogenase family. Homodimer.

It carries out the reaction shikimate + NADP(+) = 3-dehydroshikimate + NADPH + H(+). Its pathway is metabolic intermediate biosynthesis; chorismate biosynthesis; chorismate from D-erythrose 4-phosphate and phosphoenolpyruvate: step 4/7. Functionally, involved in the biosynthesis of the chorismate, which leads to the biosynthesis of aromatic amino acids. Catalyzes the reversible NADPH linked reduction of 3-dehydroshikimate (DHSA) to yield shikimate (SA). This Blochmanniella floridana protein is Shikimate dehydrogenase (NADP(+)).